The sequence spans 748 residues: Phosphoenolpyruvate-dependent phosphotransferase system (748 aa).

In terms of domain architecture, GAF spans 1–127; that stretch reads MLTRLREIVE…RRQLLGVLVV (127 aa). Residues 128-170 are linker; it reads QQRELRQYDESEESFLVTLATQMAAILSQSQLTALFGQYRQTR. The segment at 171–748 is PTS EI; sequence IRALPAAPGV…GMGGLIRGGL (578 aa). Catalysis depends on His-356, which acts as the Tele-phosphohistidine intermediate. Phosphoenolpyruvate-binding residues include Arg-462 and Arg-498. Glu-597 and Asp-621 together coordinate Mg(2+). Phosphoenolpyruvate is bound by residues 620–621 and Arg-631; that span reads ND. The active-site Proton donor is the Cys-668.

This sequence belongs to the PEP-utilizing enzyme family. It depends on Mg(2+) as a cofactor.

Its subcellular location is the cytoplasm. It carries out the reaction L-histidyl-[protein] + phosphoenolpyruvate = N(pros)-phospho-L-histidyl-[protein] + pyruvate. Its activity is regulated as follows. Inhibited by GDP and FAD. Component of the phosphoenolpyruvate-dependent nitrogen-metabolic phosphotransferase system (nitrogen-metabolic PTS), that seems to be involved in regulating nitrogen metabolism. Enzyme I-Ntr transfers the phosphoryl group from phosphoenolpyruvate (PEP) to the phosphoryl carrier protein (NPr). Could function in the transcriptional regulation of sigma-54 dependent operons in conjunction with the NPr (PtsO) and EIIA-Ntr (PtsN) proteins. Enzyme I-Ntr is specific for NPr. In Escherichia coli (strain K12), this protein is Phosphoenolpyruvate-dependent phosphotransferase system (ptsP).